The sequence spans 239 residues: Adapter protein MecA (239 aa).

Residues 118-128 (EQRTKEKEAQG) show a composition bias toward basic and acidic residues. Residues 118–137 (EQRTKEKEAQGSKRQKSSAR) are disordered.

It belongs to the MecA family. In terms of assembly, homodimer.

Its function is as follows. Enables the recognition and targeting of unfolded and aggregated proteins to the ClpC protease or to other proteins involved in proteolysis. The sequence is that of Adapter protein MecA from Staphylococcus aureus (strain Mu3 / ATCC 700698).